We begin with the raw amino-acid sequence, 226 residues long: Ribosome maturation factor RimM (226 aa).

The 82-residue stretch at Ala144–Tyr225 folds into the PRC barrel domain.

This sequence belongs to the RimM family. Binds ribosomal protein uS19.

It localises to the cytoplasm. Functionally, an accessory protein needed during the final step in the assembly of 30S ribosomal subunit, possibly for assembly of the head region. Essential for efficient processing of 16S rRNA. May be needed both before and after RbfA during the maturation of 16S rRNA. It has affinity for free ribosomal 30S subunits but not for 70S ribosomes. The protein is Ribosome maturation factor RimM of Burkholderia ambifaria (strain ATCC BAA-244 / DSM 16087 / CCUG 44356 / LMG 19182 / AMMD) (Burkholderia cepacia (strain AMMD)).